We begin with the raw amino-acid sequence, 487 residues long: Vacuolar protein sorting-associated protein 30 (487 aa).

The interval 33–129 (PQTLKKSSVP…DNPDAPMGSE (97 aa)) is disordered. The segment covering 52 to 62 (QSRKSIYDRVS) has biased composition (basic and acidic residues). Residues 81–94 (SSMSFVLLSESQMA) are compositionally biased toward polar residues. Residues 152 to 282 (VECTEMLVEG…DSQLLEKLQR (131 aa)) adopt a coiled-coil conformation. The BARA stretch occupies residues 283-480 (SNVYNDTFCI…LAHASNVTSN (198 aa)). Residues 456-481 (WTKACKLTLTCCKFLLAHASNVTSNA) are required for membrane-association, autophagic function during starvation and normal autophagosome morphology.

It belongs to the beclin family. In terms of assembly, component of the autophagy-specific VPS34 PI3-kinase complex I; and of the VPS34 PI3-kinase complex II.

The protein resides in the endosome membrane. It is found in the vacuole membrane. Its subcellular location is the preautophagosomal structure membrane. Functionally, required for cytoplasm to vacuole transport (Cvt), autophagy, nucleophagy, and mitophagy, as a part of the autophagy-specific VPS34 PI3-kinase complex I. This complex is essential to recruit the ATG8-phosphatidylinositol conjugate and the ATG12-ATG5 conjugate to the pre-autophagosomal structure. Also involved in endosome-to-Golgi retrograde transport as part of the VPS34 PI3-kinase complex II. Autophagy is required for proper vegetative growth, asexual/sexual reproduction, and full virulence. Autophagy is particularly involved in the biosynthesis of deoxynivalenol (DON), an important virulence determinant. The polypeptide is Vacuolar protein sorting-associated protein 30 (Gibberella zeae (strain ATCC MYA-4620 / CBS 123657 / FGSC 9075 / NRRL 31084 / PH-1) (Wheat head blight fungus)).